The sequence spans 350 residues: Inhibin beta E chain (350 aa).

Residues methionine 1–serine 21 form the signal peptide. Residues threonine 22–arginine 236 constitute a propeptide that is removed on maturation. The N-linked (GlcNAc...) asparagine glycan is linked to asparagine 198. Intrachain disulfides connect cysteine 240–cysteine 248, cysteine 247–cysteine 315, cysteine 276–cysteine 347, and cysteine 280–cysteine 349.

Belongs to the TGF-beta family. In terms of assembly, homodimeric or heterodimeric through association with alpha and beta subunits, linked by one or more disulfide bonds. Inhibins are heterodimers of one alpha and one beta subunit. Activins are homo- or heterodimers of beta subunits only.

The protein resides in the secreted. Its function is as follows. Inhibins and activins inhibit and activate, respectively, the secretion of follitropin by the pituitary gland. Inhibins/activins are involved in regulating a number of diverse functions such as hypothalamic and pituitary hormone secretion, gonadal hormone secretion, germ cell development and maturation, erythroid differentiation, insulin secretion, nerve cell survival, embryonic axial development or bone growth, depending on their subunit composition. Inhibins appear to oppose the functions of activins. Activin E is a homodimer of INHBE secreted by the liver that plays a crucial role in regulating metabolic homeostasis particularly in lipid metabolism and energy homeostasis. Plays a central role in the regulation of adipose tissue lipolysis by preventing the influx of fatty acids from adipose tissue into the liver. Mechanistically, signals via ACVR1C to activate SMAD2/3 signaling, suppressing PPARG target genes in adipose tissue, thereby reducing liver lipid content and improving glycemic control. Induces beige adipocyte formation and thermogenesis in response to cold exposure. This Rattus norvegicus (Rat) protein is Inhibin beta E chain (Inhbe).